The sequence spans 119 residues: MKKSYRVKREKDFQAIFKLGQSMANRKFVIYHLKGEHKHFRAGISVGKKLGNAVTRNAVKRKIRHVLMELGDHLKSEDFVVIARRGAEELDYQAVKQNLHHVLKLAKLLEEGFEIEKKS.

The protein belongs to the RnpA family. Consists of a catalytic RNA component (M1 or rnpB) and a protein subunit.

The catalysed reaction is Endonucleolytic cleavage of RNA, removing 5'-extranucleotides from tRNA precursor.. In terms of biological role, RNaseP catalyzes the removal of the 5'-leader sequence from pre-tRNA to produce the mature 5'-terminus. It can also cleave other RNA substrates such as 4.5S RNA. The protein component plays an auxiliary but essential role in vivo by binding to the 5'-leader sequence and broadening the substrate specificity of the ribozyme. The polypeptide is Ribonuclease P protein component (Streptococcus equi subsp. equi (strain 4047)).